Here is a 633-residue protein sequence, read N- to C-terminus: Chaperone protein HtpG (633 aa).

Positions 1–345 (MSADTQSETL…SDDLPLNISR (345 aa)) are a; substrate-binding. The tract at residues 346–562 (EMLQHNPMIS…EYDFGMGMQR (217 aa)) is b. The segment at 563-633 (LLQAAGHQLP…VRRVNNLLAG (71 aa)) is c.

This sequence belongs to the heat shock protein 90 family. Homodimer.

The protein localises to the cytoplasm. Functionally, molecular chaperone. Has ATPase activity. This is Chaperone protein HtpG from Halorhodospira halophila (strain DSM 244 / SL1) (Ectothiorhodospira halophila (strain DSM 244 / SL1)).